We begin with the raw amino-acid sequence, 508 residues long: General transcription factor IIF subunit 1 (508 aa).

Ala-2 is modified (N-acetylalanine). The residue at position 156 (Thr-156) is a Phosphothreonine. Positions 177-448 (MQQRRLKDQD…SSGDVQVTED (272 aa)) are disordered. Ser-217, Ser-218, Ser-221, and Ser-224 each carry phosphoserine. Residues 232–251 (SKAKKKAPVTKAGRKKKKKK) are compositionally biased toward basic residues. Composition is skewed to acidic residues over residues 255–270 (DEAF…EGQE) and 303–325 (EQSE…EEEE). The residue at position 331 (Thr-331) is a Phosphothreonine. Over residues 343-355 (DDSDSSEESDIDS) the composition is skewed to acidic residues. The span at 364–374 (AKKKTPPKRER) shows a compositional bias: basic residues. A phosphoserine mark is found at Ser-377, Ser-380, Ser-381, and Ser-385. Polar residues predominate over residues 378–388 (GGSSKGTSRPG). Residue Thr-389 is modified to Phosphothreonine. The segment covering 389-406 (TPSAEAASTSSTLRAAAS) has biased composition (low complexity). Ser-391 carries the phosphoserine modification. Lys-407 is modified (N6-acetyllysine). Residues 428 to 443 (GPQSLSGKSTPSSGDV) are compositionally biased toward polar residues. Phosphoserine occurs at positions 431, 433, and 436. A Phosphothreonine modification is found at Thr-437. Ser-440 bears the Phosphoserine mark.

It belongs to the TFIIF alpha subunit family. Heterodimer of an alpha and a beta subunit. Interacts with GTF2F2, CTDP1, TAF6/TAFII80 and URI1. Interacts with GTF2B (via C-terminus and preferentially via acetylated form); this interaction prevents binding of GTF2B to GTF2F2. Part of TBP-based Pol II pre-initiation complex (PIC), in which Pol II core assembles with general transcription factors and other specific initiation factors including GTF2E1, GTF2E2, GTF2F1, GTF2F2, TCEA1, ERCC2, ERCC3, GTF2H2, GTF2H3, GTF2H4, GTF2H5, GTF2A1, GTF2A2, GTF2B and TBP; this large multi-subunit PIC complex mediates DNA unwinding and targets Pol II core to the transcription start site where the first phosphodiester bond forms. Phosphorylated on Ser and other residues by TAF1 and casein kinase II-like kinases.

The protein localises to the nucleus. Functionally, TFIIF is a general transcription initiation factor that binds to RNA polymerase II and helps to recruit it to the initiation complex in collaboration with TFIIB. It promotes transcription elongation. This Rattus norvegicus (Rat) protein is General transcription factor IIF subunit 1 (Gtf2f1).